A 184-amino-acid chain; its full sequence is MSWRSDHICIELIAGSRKPSNVCWAFILFLGSLGFLLVGTSSYLGRNFIPFFPSQQIIFFPQGIVMSFYGIAGLFISSYLWCTISWNVGSGYDRFDIKEGIVCIFRWGFPGKNRRIFLRFLMKDIQSIRIEVKEGIYARRVLYMEIRGQGSIPLTRTDENLTLREIEQKAAELAYFLRVPIEVF.

2 consecutive transmembrane segments (helical) span residues 22 to 42 (VCWAFILFLGSLGFLLVGTSS) and 57 to 77 (IIFFPQGIVMSFYGIAGLFIS).

The protein belongs to the Ycf4 family.

It is found in the plastid. The protein localises to the chloroplast thylakoid membrane. Its function is as follows. Seems to be required for the assembly of the photosystem I complex. The polypeptide is Photosystem I assembly protein Ycf4 (Morus indica (Mulberry)).